Consider the following 565-residue polypeptide: Formate--tetrahydrofolate ligase (565 aa).

Residue 67–74 (TPLGEGKT) coordinates ATP.

It belongs to the formate--tetrahydrofolate ligase family.

It carries out the reaction (6S)-5,6,7,8-tetrahydrofolate + formate + ATP = (6R)-10-formyltetrahydrofolate + ADP + phosphate. It participates in one-carbon metabolism; tetrahydrofolate interconversion. This Saccharopolyspora erythraea (strain ATCC 11635 / DSM 40517 / JCM 4748 / NBRC 13426 / NCIMB 8594 / NRRL 2338) protein is Formate--tetrahydrofolate ligase.